The chain runs to 141 residues: Nucleoside diphosphate kinase (141 aa).

Residues K11, F59, R87, T93, R104, and N114 each contribute to the ATP site. H117 acts as the Pros-phosphohistidine intermediate in catalysis.

The protein belongs to the NDK family. As to quaternary structure, homotetramer. Requires Mg(2+) as cofactor.

The protein resides in the cytoplasm. It carries out the reaction a 2'-deoxyribonucleoside 5'-diphosphate + ATP = a 2'-deoxyribonucleoside 5'-triphosphate + ADP. It catalyses the reaction a ribonucleoside 5'-diphosphate + ATP = a ribonucleoside 5'-triphosphate + ADP. Functionally, major role in the synthesis of nucleoside triphosphates other than ATP. The ATP gamma phosphate is transferred to the NDP beta phosphate via a ping-pong mechanism, using a phosphorylated active-site intermediate. The sequence is that of Nucleoside diphosphate kinase from Burkholderia multivorans (strain ATCC 17616 / 249).